The following is a 492-amino-acid chain: Nuclear hormone receptor family member nhr-4 (492 aa).

The segment at residues 47-122 (RLICDVCGDV…VGMNPDSVQN (76 aa)) is a DNA-binding region (nuclear receptor). NR C4-type zinc fingers lie at residues 50–70 (CDVCGDVAFGKHYGINACNGC) and 86–110 (CRFGGDCPVVKEHRNVCRSCRLKKC). Residues 121–143 (QNERDRNAKNGGMGGPMSSPTQS) are disordered. Residues 215-481 (MDFSIHSAVL…ELIQATHKTT (267 aa)) enclose the NR LBD domain.

The protein belongs to the nuclear hormone receptor family.

It is found in the nucleus. Its function is as follows. Orphan nuclear receptor. The protein is Nuclear hormone receptor family member nhr-4 (nhr-4) of Caenorhabditis elegans.